The chain runs to 100 residues: Pancreatic trypsin inhibitor (100 aa).

Residues 1-21 form the signal peptide; sequence MKMSRLCLSVALLVLLGTLAA. The propeptide occupies 22–35; it reads STPGCDTSNQAKAQ. The 51-residue stretch at 40–90 folds into the BPTI/Kunitz inhibitor domain; that stretch reads CLEPPYTGPCKARIIRYFYNAKAGLCQTFVYGGCRAKRNNFKSAEDCMRTC. 3 disulfide bridges follow: cysteine 40-cysteine 90, cysteine 49-cysteine 73, and cysteine 65-cysteine 86. Positions 94–100 are excised as a propeptide; that stretch reads IGPWENL.

Its subcellular location is the secreted. Its function is as follows. Inhibits trypsin, kallikrein, chymotrypsin, and plasmin. The polypeptide is Pancreatic trypsin inhibitor (Bos taurus (Bovine)).